The sequence spans 457 residues: Exodeoxyribonuclease 7 large subunit (457 aa).

This sequence belongs to the XseA family. Heterooligomer composed of large and small subunits.

The protein resides in the cytoplasm. It carries out the reaction Exonucleolytic cleavage in either 5'- to 3'- or 3'- to 5'-direction to yield nucleoside 5'-phosphates.. Functionally, bidirectionally degrades single-stranded DNA into large acid-insoluble oligonucleotides, which are then degraded further into small acid-soluble oligonucleotides. The protein is Exodeoxyribonuclease 7 large subunit of Cronobacter sakazakii (strain ATCC BAA-894) (Enterobacter sakazakii).